A 376-amino-acid chain; its full sequence is CCA-adding enzyme (376 aa).

Residues Gly-23 and Arg-26 each contribute to the ATP site. The CTP site is built by Gly-23 and Arg-26. Mg(2+) contacts are provided by Glu-36 and Asp-38. 3 residues coordinate ATP: Arg-106, Arg-152, and Arg-155. Positions 106, 152, and 155 each coordinate CTP.

It belongs to the tRNA nucleotidyltransferase/poly(A) polymerase family. Bacterial CCA-adding enzyme type 2 subfamily. Requires Mg(2+) as cofactor.

It catalyses the reaction a tRNA precursor + 2 CTP + ATP = a tRNA with a 3' CCA end + 3 diphosphate. The catalysed reaction is a tRNA with a 3' CCA end + 2 CTP + ATP = a tRNA with a 3' CCACCA end + 3 diphosphate. Functionally, catalyzes the addition and repair of the essential 3'-terminal CCA sequence in tRNAs without using a nucleic acid template. Adds these three nucleotides in the order of C, C, and A to the tRNA nucleotide-73, using CTP and ATP as substrates and producing inorganic pyrophosphate. tRNA 3'-terminal CCA addition is required both for tRNA processing and repair. Also involved in tRNA surveillance by mediating tandem CCA addition to generate a CCACCA at the 3' terminus of unstable tRNAs. While stable tRNAs receive only 3'-terminal CCA, unstable tRNAs are marked with CCACCA and rapidly degraded. The sequence is that of CCA-adding enzyme from Coxiella burnetii (strain RSA 331 / Henzerling II).